We begin with the raw amino-acid sequence, 109 residues long: Toxin YpjF (109 aa).

It belongs to the CbtA/YkfI/YpjF toxin family. In terms of assembly, interacts with FtsZ but not MreB. Another group finds interaction with FtsZ and MreB.

Toxic component of a type IV toxin-antitoxin (TA) system. Acts as a dual toxin inhibitor that blocks cell division and cell elongation in genetically separable interactions with FtsZ and MreB. Overexpression results in inhibition of growth in liquid cultures. Overexpression leads to formation of lemon-shaped cells; inactivated by overexpression of cognate antitoxin YfjZ but not when the 2 genes are coexpressed from the same plasmid. Also neutralized by overexpression of non-cognate antitoxins YafW and CbeA. This Escherichia coli (strain K12) protein is Toxin YpjF (ypjF).